The following is a 445-amino-acid chain: Squalene synthase (445 aa).

2 helical membrane passes run Ser291–Tyr311 and Leu405–Val425.

This sequence belongs to the phytoene/squalene synthase family. It depends on Mg(2+) as a cofactor.

It is found in the endoplasmic reticulum membrane. It catalyses the reaction 2 (2E,6E)-farnesyl diphosphate + NADPH + H(+) = squalene + 2 diphosphate + NADP(+). The enzyme catalyses 2 (2E,6E)-farnesyl diphosphate + NADH + H(+) = squalene + 2 diphosphate + NAD(+). The protein operates within terpene metabolism; lanosterol biosynthesis; lanosterol from farnesyl diphosphate: step 1/3. Its function is as follows. Catalyzes the condensation of 2 two farnesyl pyrophosphate moieties to form squalene. It is the first committed enzyme of the sterol biosynthesis pathway. Required for the biosynthesis of ergosterol. In Yarrowia lipolytica (strain CLIB 122 / E 150) (Yeast), this protein is Squalene synthase (SQS1).